The chain runs to 889 residues: MADKTLNQIRTTFLDYFEKNDHKIVESSNLVPNNDPTLMFANSGMVQFKNIFTGLEKRDYVRATTSQKCVRAGGKHNDLENVGYTPRHHTFFEMLGNFSFGDYFKEEAISYAWNLITKEFGIDKNRLYVTVYHNDEEAFNFWKKIAGFSDDRIIKIATSDNFWSMGDTGPCGPCSEIFYDHGDHLEGGLPGTKNEDGNRFIEIWNLVFMQYEQISKDKRINLPKPSVDTGMGLERIAALLQGTHDNYETDHFKKLILSASDTLNVKVTDDNQSSFRVIADHLRASSFLLAEGVLPSNEGRGYVLRRIMRRGMRHSHLLGSKKPVFYNIFKTLLEEMSNNYPELERAQSLIKETLKTEEEKFLVLLDRGIKILNEELEKVEKILPGEVAFKLYDTFGFPLDLTEDILKNKSMTVDGEKFDLLMKESKKLAKKNWKGSGDSSVDQIWFDIKDRLGATDFLGYSTDKAEGVVTLILKNNKEVQDLQENDEGIIITNQTPFYGESGGQVADTGIISKEAFEFEVSDVQKKLGDLFVHYGKVKRGSVKLKDNVELKIDTQRRNNIRAYHSATHLLHEALRRVLGEHVTQKGSLVQSDRLRFDFSHMKPISDEEIRKIEHYVNSIIEKKSEVKTRIMTPKEAVENGALALFGEKYGDEVRVLSMGDEEGKFFSTELCGGTHVVNTADIGKFKIISQSSIAAGVRRVEALRDAQLIDFLKEKENQSNLSDQKNEAVIKELETKIIKLGGKPNLQNKDQVTLIKDLNRQFDQLSVISILKDKDKNKINDQTINGFKVRFQNIIDLPFKDLRKLIDEGKKEIGEGLVVIYAINDNKVGLAVGVTKTLEKKFDAVKIVRAGSEVIGGKGGGGRADFAQAGGTLPDKIEESFENIKKLIN.

His-564, His-568, Cys-671, and His-675 together coordinate Zn(2+).

It belongs to the class-II aminoacyl-tRNA synthetase family. Requires Zn(2+) as cofactor.

Its subcellular location is the cytoplasm. It catalyses the reaction tRNA(Ala) + L-alanine + ATP = L-alanyl-tRNA(Ala) + AMP + diphosphate. Functionally, catalyzes the attachment of alanine to tRNA(Ala) in a two-step reaction: alanine is first activated by ATP to form Ala-AMP and then transferred to the acceptor end of tRNA(Ala). Also edits incorrectly charged Ser-tRNA(Ala) and Gly-tRNA(Ala) via its editing domain. This chain is Alanine--tRNA ligase, found in Pelagibacter ubique (strain HTCC1062).